Here is a 706-residue protein sequence, read N- to C-terminus: Termination factor NPH-I homolog (706 aa).

In terms of domain architecture, Helicase ATP-binding spans isoleucine 62 to arginine 227. Histidine 75 to threonine 82 is an ATP binding site. Residues aspartate 168–histidine 171 carry the DEAH box motif. Residues lysine 378 to leucine 599 form the Helicase C-terminal domain.

Belongs to the DEAD box helicase family. DEAH subfamily. As to quaternary structure, part of the viral DNA-directed RNA polymerase that consists of 8 polII-like subunits (RPB1, RPB2, RPB3, RPB5, RPB6, RPB7, RPB9, RPB10), a capping enzyme and a termination factor.

The protein localises to the virion. Functionally, putative DNA-dependent ATPase required for providing the needed energy to achieve the termination of early transcripts. This African swine fever virus (isolate Pig/Kenya/KEN-50/1950) (ASFV) protein is Termination factor NPH-I homolog.